Consider the following 274-residue polypeptide: Large ribosomal subunit protein bL28m (274 aa).

Residues 249 to 274 (SETEEFGLGQEEDLFMKEEPKPTKMA) form a disordered region. The span at 262–274 (LFMKEEPKPTKMA) shows a compositional bias: basic and acidic residues.

This sequence belongs to the bacterial ribosomal protein bL28 family. Component of the mitochondrial large ribosomal subunit (mt-LSU). Mature N.crassa 74S mitochondrial ribosomes consist of a small (37S) and a large (54S) subunit. The 37S small subunit contains a 16S ribosomal RNA (16S mt-rRNA) and 32 different proteins. The 54S large subunit contains a 23S rRNA (23S mt-rRNA) and 42 different proteins.

The protein resides in the mitochondrion. Functionally, component of the mitochondrial ribosome (mitoribosome), a dedicated translation machinery responsible for the synthesis of mitochondrial genome-encoded proteins, including at least some of the essential transmembrane subunits of the mitochondrial respiratory chain. The mitoribosomes are attached to the mitochondrial inner membrane and translation products are cotranslationally integrated into the membrane. This is Large ribosomal subunit protein bL28m (mrpl24) from Neurospora crassa (strain ATCC 24698 / 74-OR23-1A / CBS 708.71 / DSM 1257 / FGSC 987).